Reading from the N-terminus, the 829-residue chain is ATP-dependent RNA helicase drs1 (829 aa).

Disordered regions lie at residues 1-96 and 145-295; these read MAPS…MDTE and RRER…MSSF. Residues 20 to 32 show a composition bias toward acidic residues; the sequence is DNEEDIPLEEEQE. A compositionally biased stretch (basic residues) spans 48–59; that stretch reads KQKKKNNKKSKK. Acidic residues predominate over residues 63–78; the sequence is TEDDDDEAETKEDDAA. Residues 150 to 163 show a composition bias toward basic and acidic residues; that stretch reads AAKEGKTTATKEEE. 4 stretches are compositionally biased toward acidic residues: residues 164–190, 218–228, 235–246, and 258–271; these read DKMEVDEEEDDIEEIDVDLDDDEDGVL, DGEDEDSEGED, DEDEGDASDDDS, and QSSDDEEGIDEEEE. Positions 272–291 are enriched in basic and acidic residues; it reads AKMKEFFAPEEENQPKKKGE. A Q motif motif is present at residues 293-321; it reads SSFQEMSLSRPILRGLTSVGFTKPTPIQA. Residues 324–498 form the Helicase ATP-binding domain; it reads IPISLMGKDV…RAGLNKPVRI (175 aa). 337-344 lines the ATP pocket; sequence AVTGSGKT. Residues 446-449 carry the DEAD box motif; the sequence is DEAD. The 180-residue stretch at 528-707 folds into the Helicase C-terminal domain; that stretch reads YLLHICKTIY…EKQLQNMEMQ (180 aa). The segment at 728-829 is disordered; the sequence is TWFETQEDKK…KGGKGKGRRK (102 aa). Residues 749–791 are compositionally biased toward basic and acidic residues; sequence GVRDKLKSKNEGKLSNKDRKKLDTMQERKQERTYKKGSAERAG. Positions 800-815 are enriched in basic residues; sequence KVVKKVGRSAGPKKKG.

This sequence belongs to the DEAD box helicase family. DDX27/DRS1 subfamily. As to quaternary structure, associates with pre-ribosomal particles.

The protein resides in the nucleus. It is found in the nucleolus. It carries out the reaction ATP + H2O = ADP + phosphate + H(+). In terms of biological role, ATP-binding RNA helicase involved in ribosome assembly. In Neurospora crassa (strain ATCC 24698 / 74-OR23-1A / CBS 708.71 / DSM 1257 / FGSC 987), this protein is ATP-dependent RNA helicase drs1 (drh-11).